The sequence spans 453 residues: Trigger factor (453 aa).

Residues 171 to 256 form the PPIase FKBP-type domain; sequence GDRVTVSFKG…ATKVEAPQDV (86 aa).

It belongs to the FKBP-type PPIase family. Tig subfamily.

The protein resides in the cytoplasm. The enzyme catalyses [protein]-peptidylproline (omega=180) = [protein]-peptidylproline (omega=0). In terms of biological role, involved in protein export. Acts as a chaperone by maintaining the newly synthesized protein in an open conformation. Functions as a peptidyl-prolyl cis-trans isomerase. This Rhodopseudomonas palustris (strain BisB5) protein is Trigger factor.